The following is a 126-amino-acid chain: Small ribosomal subunit protein uS12 (126 aa).

The span at Met-1 to Lys-16 shows a compositional bias: polar residues. The disordered stretch occupies residues Met-1–Leu-24. Asp-89 carries the 3-methylthioaspartic acid modification.

Belongs to the universal ribosomal protein uS12 family. Part of the 30S ribosomal subunit. Contacts proteins S8 and S17. May interact with IF1 in the 30S initiation complex.

In terms of biological role, with S4 and S5 plays an important role in translational accuracy. Interacts with and stabilizes bases of the 16S rRNA that are involved in tRNA selection in the A site and with the mRNA backbone. Located at the interface of the 30S and 50S subunits, it traverses the body of the 30S subunit contacting proteins on the other side and probably holding the rRNA structure together. The combined cluster of proteins S8, S12 and S17 appears to hold together the shoulder and platform of the 30S subunit. In Elusimicrobium minutum (strain Pei191), this protein is Small ribosomal subunit protein uS12.